Consider the following 87-residue polypeptide: Conotoxin Ca6.2 (87 aa).

Positions 1–19 are cleaved as a signal peptide; that stretch reads MHTLEMLLLVLLLVPLAPG. Residues 20-52 constitute a propeptide that is removed on maturation; it reads EGDGQAVGGDRNPSEARRAYKRLLQRPARRMDR. Intrachain disulfides connect Cys-55–Cys-64, Cys-58–Cys-70, and Cys-63–Cys-84.

The protein belongs to the conotoxin Q superfamily. As to expression, expressed by the venom duct.

It is found in the secreted. The polypeptide is Conotoxin Ca6.2 (Conus caracteristicus (Characteristic cone)).